The primary structure comprises 356 residues: UDP-N-acetylglucosamine--N-acetylmuramyl-(pentapeptide) pyrophosphoryl-undecaprenol N-acetylglucosamine transferase (356 aa).

UDP-N-acetyl-alpha-D-glucosamine contacts are provided by residues 11–13, Asn-123, Arg-159, and Ser-192; that span reads TAG.

It belongs to the glycosyltransferase 28 family. MurG subfamily.

The protein resides in the cell membrane. It catalyses the reaction di-trans,octa-cis-undecaprenyl diphospho-N-acetyl-alpha-D-muramoyl-L-alanyl-D-glutamyl-meso-2,6-diaminopimeloyl-D-alanyl-D-alanine + UDP-N-acetyl-alpha-D-glucosamine = di-trans,octa-cis-undecaprenyl diphospho-[N-acetyl-alpha-D-glucosaminyl-(1-&gt;4)]-N-acetyl-alpha-D-muramoyl-L-alanyl-D-glutamyl-meso-2,6-diaminopimeloyl-D-alanyl-D-alanine + UDP + H(+). It participates in cell wall biogenesis; peptidoglycan biosynthesis. Its function is as follows. Cell wall formation. Catalyzes the transfer of a GlcNAc subunit on undecaprenyl-pyrophosphoryl-MurNAc-pentapeptide (lipid intermediate I) to form undecaprenyl-pyrophosphoryl-MurNAc-(pentapeptide)GlcNAc (lipid intermediate II). The sequence is that of UDP-N-acetylglucosamine--N-acetylmuramyl-(pentapeptide) pyrophosphoryl-undecaprenol N-acetylglucosamine transferase from Tropheryma whipplei (strain Twist) (Whipple's bacillus).